We begin with the raw amino-acid sequence, 129 residues long: Fluoride-specific ion channel FluC (129 aa).

The next 4 helical transmembrane spans lie at 5–25 (LTIA…SGWV), 32–52 (AFPF…GLIM), 60–80 (LIPA…LTTF), and 99–119 (AMVN…LGVI). The Na(+) site is built by Gly75 and Thr78.

The protein belongs to the fluoride channel Fluc/FEX (TC 1.A.43) family.

Its subcellular location is the cell inner membrane. The enzyme catalyses fluoride(in) = fluoride(out). Its activity is regulated as follows. Na(+) is not transported, but it plays an essential structural role and its presence is essential for fluoride channel function. Its function is as follows. Fluoride-specific ion channel. Important for reducing fluoride concentration in the cell, thus reducing its toxicity. The chain is Fluoride-specific ion channel FluC from Pelobacter propionicus (strain DSM 2379 / NBRC 103807 / OttBd1).